Consider the following 242-residue polypeptide: Large ribosomal subunit protein uL1 (242 aa).

The protein belongs to the universal ribosomal protein uL1 family. As to quaternary structure, part of the 50S ribosomal subunit.

Its function is as follows. Binds directly to 23S rRNA. The L1 stalk is quite mobile in the ribosome, and is involved in E site tRNA release. Protein L1 is also a translational repressor protein, it controls the translation of the L11 operon by binding to its mRNA. This Streptomyces virginiae (Streptomyces cinnamonensis) protein is Large ribosomal subunit protein uL1.